The chain runs to 645 residues: MLGVCYYPEHWPKERWKEDARRMREAGLSHVRIGEFAWALLEPEPGRLEWGWLDEAIATLAAEGLKVVLGTPTATPPKWLVDRYPEILPVDREGRRRRFGGRRHYCFSSPVYREEARRIVTLLAERYGGLEAVAGFQTDNEYGCHDTVRCYCPRCQEAFRGWLEARYGTIEALNEAWGTAFWSQRYRSFAEVELPHLTVAEPNPSHLLDYYRFASDQVRAFNRLQVEILRAHAPGKFVTHNFMGFFTDLDAFALAQDLDFASWDSYPLGFTDLMPLPPEEKLRYARTGHPDVAAFHHDLYRGVGRGRFWVMEQQPGPVNWAPHNPSPAPGMVRLWTWEALAHGAEVVSYFRWRQAPFAQEQMHAGLHRPDSAPDQGFFEAKRVAEELAALALPPVAQAPVALVFDYEAAWIYEVQPQGAEWSYLGLVYLFYSALRRLGLDVDVVPPGASLRGYAFAVVPSLPIVREEALEAFREAEGPVLFGPRSGSKTETFQIPKELPPGPLQALLPLKVVRVESLPPGLLEVAEGALGRFPLGLWREWVEAPLKPLLTFQDGKGALYREGRYLYLAAWPSPELAGRLLSALAAEAGLKVLSLPEGLRLRRRGTWVFAFNYGPEAVEAPASEGARFLLGSRRVGPYDLAVWEEA.

Arginine 102 contacts substrate. Cysteine 106 is a binding site for Zn(2+). Position 140 (asparagine 140) interacts with substrate. The active-site Proton donor is glutamate 141. Residues cysteine 150, cysteine 152, and cysteine 155 each coordinate Zn(2+). Residue glutamate 312 is the Nucleophile of the active site. Residues tryptophan 320 and 360–363 each bind substrate; that span reads EQMH.

Belongs to the glycosyl hydrolase 42 family. As to quaternary structure, homotrimer.

The enzyme catalyses Hydrolysis of terminal non-reducing beta-D-galactose residues in beta-D-galactosides.. Its activity is regulated as follows. Inhibited by Cu(2+) and Fe(2+), and moderately activated by divalent cations such as Co(2+), Mn(2+) and Zn(2+). Considerably activated by dithiothreitol, beta-mercaptoethanol and cysteine. The polypeptide is Beta-galactosidase (Thermus thermophilus).